Here is a 159-residue protein sequence, read N- to C-terminus: Protein phosphatase 1 regulatory subunit 17 (159 aa).

2 disordered regions span residues Met1–Pro79 and Arg98–His127. Basic and acidic residues-rich tracts occupy residues Ser62–Pro73 and Ser111–Pro124. Phosphothreonine; by PKG/PRKG1 is present on residues Thr72 and Thr123.

In terms of processing, substrate for cGMP-dependent protein kinase. Phosphorylation of Thr-72 and Thr-123 is required for its phosphatase activity. Phosphorylated by PRKG1 isoform alpha. As to expression, expressed in Purkinje cells of the cerebellum, hippocampus, pons, medulla and eye.

In terms of biological role, inhibits phosphatase activities of protein phosphatase 1 (PP1) and protein phosphatase 2A (PP2A) complexes. The sequence is that of Protein phosphatase 1 regulatory subunit 17 (Ppp1r17) from Mus musculus (Mouse).